The following is a 311-amino-acid chain: Probable manganese-dependent inorganic pyrophosphatase (311 aa).

Residues histidine 9, aspartate 13, aspartate 15, aspartate 75, histidine 97, and aspartate 149 each contribute to the Mn(2+) site.

Belongs to the PPase class C family. Requires Mn(2+) as cofactor.

It localises to the cytoplasm. It catalyses the reaction diphosphate + H2O = 2 phosphate + H(+). The sequence is that of Probable manganese-dependent inorganic pyrophosphatase from Shouchella clausii (strain KSM-K16) (Alkalihalobacillus clausii).